The following is a 61-amino-acid chain: Small ribosomal subunit protein uS14B (61 aa).

C24, C27, C40, and C43 together coordinate Zn(2+).

The protein belongs to the universal ribosomal protein uS14 family. Zinc-binding uS14 subfamily. In terms of assembly, part of the 30S ribosomal subunit. Contacts proteins S3 and S10. It depends on Zn(2+) as a cofactor.

Binds 16S rRNA, required for the assembly of 30S particles and may also be responsible for determining the conformation of the 16S rRNA at the A site. This is Small ribosomal subunit protein uS14B from Staphylococcus epidermidis (strain ATCC 35984 / DSM 28319 / BCRC 17069 / CCUG 31568 / BM 3577 / RP62A).